Consider the following 165-residue polypeptide: Peptide methionine sulfoxide reductase MsrA (165 aa).

Cys-10 is an active-site residue.

This sequence belongs to the MsrA Met sulfoxide reductase family.

It catalyses the reaction L-methionyl-[protein] + [thioredoxin]-disulfide + H2O = L-methionyl-(S)-S-oxide-[protein] + [thioredoxin]-dithiol. The enzyme catalyses [thioredoxin]-disulfide + L-methionine + H2O = L-methionine (S)-S-oxide + [thioredoxin]-dithiol. Has an important function as a repair enzyme for proteins that have been inactivated by oxidation. Catalyzes the reversible oxidation-reduction of methionine sulfoxide in proteins to methionine. This Campylobacter jejuni subsp. jejuni serotype O:23/36 (strain 81-176) protein is Peptide methionine sulfoxide reductase MsrA.